The sequence spans 757 residues: MNIQQIVKEKGLGLLFRQGTVGIEKESQRVHADGSIVTSEHPKAFGNRSYHPYIQTDFAESQLELITPPNKKIEDTLRWLSALHEVTLRTIDENEYIFPMSMPAGLPPEQEIRVAQLDNAADVAYREHLVASYGKAKQMVSGIHYNFQLDPKLVETLFNAQTDYKSAVDFQNNLYLKMAKNFLRYQWIPLYLLSATPTVEANYFKDGSPLKPNQYVRSLRSSKYGYVNAPDIIVSFDSIEKYVETLEHWVNSGRLIAEKEFYSNVRLRGAKKAREFLHTGIQYLEFRLFDLNPFEAYGINLKDAKFIHHFILLMIWLEETADQDAVELGRARLGEVAFEDPHSETAYRDEGEQIINQLIDMLKAIGAEQSAVEFAEEKLAQFANPGQTLCARLVDAIEQAGGYQQLGGEIAKRNKVQAFERFYALSAFDNMELSTQALMFDAIQKGLNMEILDENDQFLRLQFGDHFEYVKNGNMTSHDSYISPLIMENKVVTKKVLAKAGFNVPQSLEFTSVEQAVASYPLFEGKAVVIKPKSTNFGLGISIFQQGVHDKADFAKAVEIAFREDKEVMVEDYLVGTEYRFFVLGNETLAVLLRVPANVMGDGVHTVAELVAAKNDHPLRGDGSRTPLKKIALGEIEQLQLKEQGLTVDSVPAKDQLVQLRANSNISTGGDSIDMTDEMHPSYKDLAVGITKAMGAAVCGVDLIIPDLKKPAEPNLSSWGVIEANFNPMMMMHIFPYSGKSRRLTLNVLGMLFPELV.

The tract at residues 1–337 is glutamate--cysteine ligase; sequence MNIQQIVKEK…LGRARLGEVA (337 aa). In terms of domain architecture, ATP-grasp spans 494–757; sequence KKVLAKAGFN…VLGMLFPELV (264 aa). 521–580 lines the ATP pocket; the sequence is PLFEGKAVVIKPKSTNFGLGISIFQQGVHDKADFAKAVEIAFREDKEVMVEDYLVGTEYR. Positions 702, 723, and 725 each coordinate Mg(2+). Mn(2+) contacts are provided by Asp702, Glu723, and Asn725.

This sequence in the N-terminal section; belongs to the glutamate--cysteine ligase type 1 family. Type 2 subfamily. Monomer. Mg(2+) serves as cofactor. The cofactor is Mn(2+).

The catalysed reaction is L-cysteine + L-glutamate + ATP = gamma-L-glutamyl-L-cysteine + ADP + phosphate + H(+). It carries out the reaction gamma-L-glutamyl-L-cysteine + glycine + ATP = glutathione + ADP + phosphate + H(+). It participates in sulfur metabolism; glutathione biosynthesis; glutathione from L-cysteine and L-glutamate: step 1/2. It functions in the pathway sulfur metabolism; glutathione biosynthesis; glutathione from L-cysteine and L-glutamate: step 2/2. Its function is as follows. Synthesizes glutathione from L-glutamate and L-cysteine via gamma-L-glutamyl-L-cysteine. The polypeptide is Glutathione biosynthesis bifunctional protein GshAB (Mannheimia succiniciproducens (strain KCTC 0769BP / MBEL55E)).